The sequence spans 415 residues: MGSLGAILKHPEDFYPLLKLKFAARHAEKQIPPEPHWAFCYSMLHKVSRSFGLVIQQLGPQLRDAVCIFYLVLRALDTVEDDTSIPTEVKVPILMAFHRHIYDKDWHFSCGTKEYKVLMDEFHHVSNAFLELGSGYQEAIEDITMRMGAGMAKFICKEVETINDYDEYCHYVAGLVGLGLSKLFHASGAEDLATDSLSNSMGLFLQKTNIIRDYLEDINEIPKSRMFWPRQIWSKYVDKLEDLKYEENSAKAVQCLNDMVTDALVHAEDCLKYMSDLRGPAIFRFCAIPQIMAIGTLALCFNNTQVFRGVVKMRRGLTAKVIDQTKTMSDVYGAFFDFSCLLKSKVDNNDPNATKTLSRLEAIQKTCKESGTLSKRKSYIIESESGHNSALIAIIFIILAILYAYLSSNLLLNKQ.

Helical transmembrane passes span 281 to 301 (AIFRFCAIPQIMAIGTLALCF) and 391 to 411 (LIAIIFIILAILYAYLSSNLL).

This sequence belongs to the phytoene/squalene synthase family. Mg(2+) serves as cofactor. It depends on Mn(2+) as a cofactor. Mostly expressed in the shoot apex (buds) and roots, and, to a lower extent, in stems, leaves, flowers and seeds.

It localises to the endoplasmic reticulum membrane. It catalyses the reaction 2 (2E,6E)-farnesyl diphosphate + NADH + H(+) = squalene + 2 diphosphate + NAD(+). It carries out the reaction 2 (2E,6E)-farnesyl diphosphate + NADPH + H(+) = squalene + 2 diphosphate + NADP(+). Its pathway is terpene metabolism; lanosterol biosynthesis; lanosterol from farnesyl diphosphate: step 1/3. In terms of biological role, component of the triterpene saponins (e.g. ginsenosides or panaxosides) and phytosterols biosynthetic pathways. Catalyzes the biosynthesis of squalene. The polypeptide is Squalene synthase 1 (Panax ginseng (Korean ginseng)).